The sequence spans 134 residues: ATP synthase epsilon chain, chloroplastic (134 aa).

The protein belongs to the ATPase epsilon chain family. In terms of assembly, F-type ATPases have 2 components, CF(1) - the catalytic core - and CF(0) - the membrane proton channel. CF(1) has five subunits: alpha(3), beta(3), gamma(1), delta(1), epsilon(1). CF(0) has three main subunits: a, b and c.

The protein resides in the plastid. It is found in the chloroplast thylakoid membrane. Produces ATP from ADP in the presence of a proton gradient across the membrane. The sequence is that of ATP synthase epsilon chain, chloroplastic from Phalaenopsis aphrodite subsp. formosana (Moth orchid).